The primary structure comprises 492 residues: Heat shock factor protein 4 (492 aa).

The DNA-binding element occupies 17–121 (VPAFLGKLWA…QLLERVRRKV (105 aa)). Positions 129 to 203 (GRWRPEDLGR…GPLQTGSSGA (75 aa)) are hydrophobic repeat HR-A/B. The interval 245–323 (LPETTLGLSS…ECDFCVTAPP (79 aa)) is interactions with DUSP26, MAPK1 and MAPK2. The segment at 250–286 (LGLSSSHRTRGPIISDIHEDSPSPDGTRLSPSSGGRR) is disordered. K294 is covalently cross-linked (Glycyl lysine isopeptide (Lys-Gly) (interchain with G-Cter in SUMO)). The residue at position 299 (S299) is a Phosphoserine. Residues 337-378 (KGNFSPEGPRNAQQPEPRGPREVPDRGTLGLDRGARSPENLL) form a disordered region. Positions 365 to 390 (LGLDRGARSPENLLPPMLLRAPPESV) are hydrophobic repeat HR-C.

The protein belongs to the HSF family. Homotrimer. Exhibits constitutive DNA binding and forms trimers even in the absence of stress. Interacts with ALKBH4, DUSP26, MAPK1, MAPK2, MAPK8 and MAP kinase p38. In terms of processing, phosphorylated mainly on serine residues. Phosphorylation on Ser-299 promotes sumoylation on Lys-294. Constitutively sumoylated. Sumoylation represses the transcriptional activity and is promoted by phosphorylation on Ser-299.

Its subcellular location is the nucleus. In terms of biological role, heat-shock transcription factor that specifically binds heat shock promoter elements (HSE). Required for denucleation and organelle rupture and degradation that occur during eye lens terminal differentiation, when fiber cells that compose the lens degrade all membrane-bound organelles in order to provide lens with transparency to allow the passage of light. In this process, may regulate denucleation of lens fiber cells in part by activating DNASE2B transcription. May be involved in DNA repair through the transcriptional regulation of RAD51. May up-regulate p53/TP53 protein in eye lens fiber cells, possibly through protein stabilization. In the eye lens, controls the expression of alpha-crystallin B chain/CRYAB and consequently may be involved in the regulation of lysosomal acidification. The sequence is that of Heat shock factor protein 4 (HSF4) from Canis lupus familiaris (Dog).